The primary structure comprises 70 residues: Large ribosomal subunit protein bL32c (70 aa).

Disordered regions lie at residues Met1 to Arg20 and Asn51 to Pro70. Positions Asp52–Lys61 are enriched in polar residues.

It belongs to the bacterial ribosomal protein bL32 family.

It localises to the plastid. Its subcellular location is the chloroplast. This chain is Large ribosomal subunit protein bL32c (rpl32), found in Pinus thunbergii (Japanese black pine).